A 157-amino-acid polypeptide reads, in one-letter code: Small ribosomal subunit protein uS7 (157 aa).

The protein belongs to the universal ribosomal protein uS7 family. As to quaternary structure, part of the 30S ribosomal subunit. Contacts proteins S9 and S11.

Functionally, one of the primary rRNA binding proteins, it binds directly to 16S rRNA where it nucleates assembly of the head domain of the 30S subunit. Is located at the subunit interface close to the decoding center, probably blocks exit of the E-site tRNA. The chain is Small ribosomal subunit protein uS7 from Chlamydia caviae (strain ATCC VR-813 / DSM 19441 / 03DC25 / GPIC) (Chlamydophila caviae).